The sequence spans 79 residues: Sulfur carrier protein TusA (79 aa).

Cys17 functions as the Cysteine persulfide intermediate in the catalytic mechanism.

The protein belongs to the sulfur carrier protein TusA family.

Its subcellular location is the cytoplasm. In terms of biological role, sulfur carrier protein which probably makes part of a sulfur-relay system. This is Sulfur carrier protein TusA from Pseudoalteromonas translucida (strain TAC 125).